Here is a 201-residue protein sequence, read N- to C-terminus: Large ribosomal subunit protein uL4 (201 aa).

Positions 43–69 are disordered; the sequence is TKAQKTRSEVAGGGKKPWRQKGTGRAR.

It belongs to the universal ribosomal protein uL4 family. In terms of assembly, part of the 50S ribosomal subunit.

Its function is as follows. One of the primary rRNA binding proteins, this protein initially binds near the 5'-end of the 23S rRNA. It is important during the early stages of 50S assembly. It makes multiple contacts with different domains of the 23S rRNA in the assembled 50S subunit and ribosome. Forms part of the polypeptide exit tunnel. This is Large ribosomal subunit protein uL4 from Idiomarina loihiensis (strain ATCC BAA-735 / DSM 15497 / L2-TR).